The primary structure comprises 182 residues: Probable RNA 2'-phosphotransferase (182 aa).

This sequence belongs to the KptA/TPT1 family.

Removes the 2'-phosphate from RNA via an intermediate in which the phosphate is ADP-ribosylated by NAD followed by a presumed transesterification to release the RNA and generate ADP-ribose 1''-2''-cyclic phosphate (APPR&gt;P). May function as an ADP-ribosylase. In Trichormus variabilis (strain ATCC 29413 / PCC 7937) (Anabaena variabilis), this protein is Probable RNA 2'-phosphotransferase.